Reading from the N-terminus, the 1137-residue chain is DNA mismatch repair protein Msh3 (1137 aa).

Composition is skewed to low complexity over residues 31–42 (TGSLKSTSSSTG) and 51–62 (AAAAAAAAAAAA). 2 disordered regions span residues 31–122 (TGSL…SEPK) and 201–222 (SQFG…KSAN). At S33 the chain carries Phosphoserine. The span at 63–76 (PPAPPAPAFPPQLP) shows a compositional bias: pro residues. Residues 75-297 (LPPHIATEID…HRLFVHVRRL (223 aa)) are interaction with EXO1. Residues 81–97 (TEIDRRKKRPLENDGPV) are compositionally biased toward basic and acidic residues. Residues 201–220 (SQFGSSNTSHENLQKTASKS) are compositionally biased toward polar residues. Residue 896–903 (GPNMGGKS) participates in ATP binding. The residue at position 1099 (T1099) is a Phosphothreonine.

Belongs to the DNA mismatch repair MutS family. MSH3 subfamily. Component of the DNA mismatch repair (MMR) complex composed at least of MSH2, MSH3, MSH6, PMS1 and MLH1. Heterodimer consisting of MSH2-MSH3 (MutS beta). Forms a ternary complex with MutL alpha (MLH1-PMS1). Interacts with EXO1. Interacts with MCM9.

Its function is as follows. Component of the post-replicative DNA mismatch repair system (MMR). Heterodimerizes with MSH2 to form MutS beta which binds to DNA mismatches thereby initiating DNA repair. When bound, the MutS beta heterodimer bends the DNA helix and shields approximately 20 base pairs. MutS beta recognizes large insertion-deletion loops (IDL) up to 13 nucleotides long. After mismatch binding, forms a ternary complex with the MutL alpha heterodimer, which is thought to be responsible for directing the downstream MMR events, including strand discrimination, excision, and resynthesis. This chain is DNA mismatch repair protein Msh3 (MSH3), found in Homo sapiens (Human).